The following is a 157-amino-acid chain: MTDFSVWEAAPFGATVDHILQRYHNVHRAQFEELVPLAQKVAQVHADTFPAEIAGLLADMRDELLMHMMKEERMLFPMINQGVGRGAAMPISVMMHEHEEHDRAIARLKELTGNFHAPEGACGSWTRLYALAKEMADDLNDHIHLENDILFARVLDS.

This sequence belongs to the RIC family.

It is found in the cytoplasm. Functionally, di-iron-containing protein involved in the repair of iron-sulfur clusters damaged by oxidative and nitrosative stress conditions. Required to repair damage caused by nitric oxide to FNR and NsrR transcription factors. This Neisseria gonorrhoeae protein is Iron-sulfur cluster repair protein DnrN (dnrN).